The primary structure comprises 270 residues: Formamidopyrimidine-DNA glycosylase (270 aa).

Pro2 functions as the Schiff-base intermediate with DNA in the catalytic mechanism. The active-site Proton donor is Glu3. Residue Lys58 is the Proton donor; for beta-elimination activity of the active site. Positions 90, 109, and 152 each coordinate DNA. An FPG-type zinc finger spans residues 237 to 270 (RVYGREGEPCHCGTVIRRRVDGGRSTFYCPKCQK). Catalysis depends on Arg260, which acts as the Proton donor; for delta-elimination activity.

This sequence belongs to the FPG family. In terms of assembly, monomer. Zn(2+) serves as cofactor.

It carries out the reaction Hydrolysis of DNA containing ring-opened 7-methylguanine residues, releasing 2,6-diamino-4-hydroxy-5-(N-methyl)formamidopyrimidine.. It catalyses the reaction 2'-deoxyribonucleotide-(2'-deoxyribose 5'-phosphate)-2'-deoxyribonucleotide-DNA = a 3'-end 2'-deoxyribonucleotide-(2,3-dehydro-2,3-deoxyribose 5'-phosphate)-DNA + a 5'-end 5'-phospho-2'-deoxyribonucleoside-DNA + H(+). Functionally, involved in base excision repair of DNA damaged by oxidation or by mutagenic agents. Acts as a DNA glycosylase that recognizes and removes damaged bases. Has a preference for oxidized purines, such as 7,8-dihydro-8-oxoguanine (8-oxoG). Has AP (apurinic/apyrimidinic) lyase activity and introduces nicks in the DNA strand. Cleaves the DNA backbone by beta-delta elimination to generate a single-strand break at the site of the removed base with both 3'- and 5'-phosphates. The protein is Formamidopyrimidine-DNA glycosylase of Rhizorhabdus wittichii (strain DSM 6014 / CCUG 31198 / JCM 15750 / NBRC 105917 / EY 4224 / RW1) (Sphingomonas wittichii).